The chain runs to 102 residues: MHVKKGDKVKVITGKDKGKEGVILAAFPKQDRVLVEGVNIVKKHVKPNQLNPQGGIVSQEAAIHVSNVMLIDPKSGEPTRVGYKIENGKKVRVAKKSGAVID.

It belongs to the universal ribosomal protein uL24 family. As to quaternary structure, part of the 50S ribosomal subunit.

Its function is as follows. One of two assembly initiator proteins, it binds directly to the 5'-end of the 23S rRNA, where it nucleates assembly of the 50S subunit. One of the proteins that surrounds the polypeptide exit tunnel on the outside of the subunit. The chain is Large ribosomal subunit protein uL24 from Lysinibacillus sphaericus (strain C3-41).